A 132-amino-acid chain; its full sequence is MKHVKPFFLFVDPKKSASGKQGEASSHGKGFLICRYASFPLHTESKVVRFANVTDQKFGHALSFFFSYIHCTRHVGSAPLTVSQPHIDVHCEQPISFHVSQCPAYENCHSLPLDPQSPLHSPPLSTSPDSRR.

The disordered stretch occupies residues 113-132; that stretch reads LDPQSPLHSPPLSTSPDSRR.

This is an uncharacterized protein from Saccharomyces cerevisiae (strain ATCC 204508 / S288c) (Baker's yeast).